We begin with the raw amino-acid sequence, 108 residues long: Kanamycin resistance protein (108 aa).

One can recognise an N-acetyltransferase domain in the interval 1-99 (SRTLLLERGR…PAVYMVQTRQ (99 aa)).

This is Kanamycin resistance protein from Rhizobium radiobacter (Agrobacterium tumefaciens).